The primary structure comprises 1036 residues: Multidrug resistance protein MdtC (1036 aa).

10 helical membrane-spanning segments follow: residues 12-34 (VATTLLSLAITLCGVLGFTLLPV), 336-353 (RALVIAIGLVILVVFLFL), 360-382 (LIPAIAVPVSLIGTFTAMYLCGF), 431-450 (VGFTVLSMSISLVAVFIPLL), 463-485 (FAITLTTSISISLLVSLTLTPMM), 528-547 (WVLLILAGIIALNVWLYINI), 853-875 (LFLILAAIITVYLVLGILYESYI), 895-917 (LELFDTPFSLIALIGIMLLIGIV), 949-971 (LRFRPILMTTLAALFGSLPLVLS), and 986-1008 (IVGGLVMSQLLTLYTTPVVYLCF).

It belongs to the resistance-nodulation-cell division (RND) (TC 2.A.6) family. MdtC subfamily. Part of a tripartite efflux system composed of MdtA, MdtB and MdtC. MdtC forms a heteromultimer with MdtB.

Its subcellular location is the cell inner membrane. The protein is Multidrug resistance protein MdtC of Photorhabdus laumondii subsp. laumondii (strain DSM 15139 / CIP 105565 / TT01) (Photorhabdus luminescens subsp. laumondii).